Here is a 367-residue protein sequence, read N- to C-terminus: DNA replication and repair protein RecF (367 aa).

ATP is bound at residue 30–37 (GANGSGKT).

The protein belongs to the RecF family.

The protein resides in the cytoplasm. Its function is as follows. The RecF protein is involved in DNA metabolism; it is required for DNA replication and normal SOS inducibility. RecF binds preferentially to single-stranded, linear DNA. It also seems to bind ATP. This Pseudomonas putida (strain GB-1) protein is DNA replication and repair protein RecF.